Here is a 443-residue protein sequence, read N- to C-terminus: ATP-dependent protease ATPase subunit HslU (443 aa).

ATP-binding positions include isoleucine 20, 62–67, aspartate 255, glutamate 321, and arginine 393; that span reads GVGKTE.

This sequence belongs to the ClpX chaperone family. HslU subfamily. In terms of assembly, a double ring-shaped homohexamer of HslV is capped on each side by a ring-shaped HslU homohexamer. The assembly of the HslU/HslV complex is dependent on binding of ATP.

It is found in the cytoplasm. Its function is as follows. ATPase subunit of a proteasome-like degradation complex; this subunit has chaperone activity. The binding of ATP and its subsequent hydrolysis by HslU are essential for unfolding of protein substrates subsequently hydrolyzed by HslV. HslU recognizes the N-terminal part of its protein substrates and unfolds these before they are guided to HslV for hydrolysis. This Helicobacter pylori (strain ATCC 700392 / 26695) (Campylobacter pylori) protein is ATP-dependent protease ATPase subunit HslU.